A 1771-amino-acid polypeptide reads, in one-letter code: Replicase polyprotein (1771 aa).

Positions 1–29 (MSFQQTNNNATNNINSLEELAAQELIAAQ) form a coiled coil. The segment at 16 to 25 (SLEELAAQEL) is BC-box. The interaction with and inhibition of host AGO2 stretch occupies residues 106 to 114 (PEHRYGSTF). An SF3 helicase domain is found at 482 to 656 (AKSLYEQVLL…QEKSIWVRNA (175 aa)). 510–517 (GESGIGKT) contacts ATP. Residues 919–942 (VEVGSSGDSKTQKQRNTKVEVGKE) form a disordered region. A Peptidase C3 domain is found at 954 to 1201 (DPAAHALVLD…YACPLTQEAI (248 aa)). Residues His1003, Asp1063, and Cys1162 each act as for picornain 3C-like protease activity in the active site. Positions 1385–1413 (GEQYDFTSQRAQELRRDVEELIDNCAKGI) form a coiled coil. The RdRp catalytic domain maps to 1495 to 1634 (NKVIAGDFGN…NISDRVVEWF (140 aa)).

Interacts with host AGO2; this interaction leads to AGO2 degradation via an E3 ubiquitin ligase-dependent pathway and may block the RNA-induced silencing complexes (RISC) activity. Might be expressed through a ribosomal skip from one codon to the next without formation of a peptide bond.

The protein localises to the host cytoplasm. Its subcellular location is the host perinuclear region. The catalysed reaction is RNA(n) + a ribonucleoside 5'-triphosphate = RNA(n+1) + diphosphate. In terms of biological role, suppressor of RNA-mediated gene silencing, an antiviral defense mechanism of insect cells. Inhibits siRNA function through the direct enzymatic inactivation of host AGO2, but does not interfere with miRNA pathway. Facilitates viral replication via the recruitment of a cellular ubiquitin ligase complex that promotes host AGO2 degradation. Inhibits the integrated stress response (ISR) in the infected cell possiby by degrading host Nup358. Stress granule formation is thus inhibited, which allows protein synthesis and viral replication. Does not bind to dsRNA or siRNA. Its function is as follows. Replicates the genomic and antigenomic RNA. The sequence is that of Replicase polyprotein from Teleogryllus oceanicus (black field cricket).